We begin with the raw amino-acid sequence, 94 residues long: Small ribosomal subunit protein uS19 (94 aa).

This sequence belongs to the universal ribosomal protein uS19 family.

In terms of biological role, protein S19 forms a complex with S13 that binds strongly to the 16S ribosomal RNA. This Carboxydothermus hydrogenoformans (strain ATCC BAA-161 / DSM 6008 / Z-2901) protein is Small ribosomal subunit protein uS19.